Here is a 244-residue protein sequence, read N- to C-terminus: uncharacterized protein (244 aa).

A run of 6 helical transmembrane segments spans residues 5 to 27 (KFAL…LLAV), 37 to 59 (IVMV…SRFL), 87 to 106 (LVFI…FYYG), 116 to 138 (LSLF…FFVA), 159 to 181 (FWIW…VQPS), and 196 to 218 (GVFN…RMVA).

It localises to the cell membrane. This is an uncharacterized protein from Archaeoglobus fulgidus (strain ATCC 49558 / DSM 4304 / JCM 9628 / NBRC 100126 / VC-16).